The primary structure comprises 1505 residues: G patch domain-containing protein 8 (1505 aa).

The G-patch domain maps to 40 to 86 (SDNIGHRLLQKHGWKLGQGLGKSLQGRTDPIPIVVKYDVMGMGRMEM). Residues 89 to 124 (DYAEDATERRRVLEVEKEDTEELRQKYKDYVDKEKA) adopt a coiled-coil conformation. A C2H2-type zinc finger spans residues 136–160 (FYCELCDKQYQKHQEFDNHINSYDH). Basic and acidic residues-rich tracts occupy residues 166 to 175 (LKDLKQREFA) and 182 to 206 (SRKD…RKQA). The segment at 166–244 (LKDLKQREFA…SSTNSGASAV (79 aa)) is disordered. Acidic residues predominate over residues 223 to 233 (VDEDGGEEDKD). Residue Lys-311 forms a Glycyl lysine isopeptide (Lys-Gly) (interchain with G-Cter in SUMO2) linkage. Composition is skewed to basic and acidic residues over residues 322–339 (HAEE…EKSS) and 421–436 (EGDH…ENRK). Disordered stretches follow at residues 322 to 393 (HAEE…EPEY) and 419 to 537 (QMEG…FPVL). Over residues 437–449 (SSSPKPQGCSKTA) the composition is skewed to polar residues. The residue at position 479 (Lys-479) is an N6-acetyllysine. Lys-573 participates in a covalent cross-link: Glycyl lysine isopeptide (Lys-Gly) (interchain with G-Cter in SUMO2). Basic and acidic residues-rich tracts occupy residues 575 to 612 (SRNK…KSQE) and 648 to 665 (SETE…EPSG). Residues 575–1304 (SRNKDAKAKG…ESTDGTEDAS (730 aa)) form a disordered region. Ser-648 carries the phosphoserine modification. A compositionally biased stretch (basic residues) spans 666–687 (KSHRHKKKKKHKKSSKHKRKHK). A compositionally biased stretch (basic and acidic residues) spans 688 to 702 (ADTEEKSSKAESGEK). Over residues 703-715 (SKKRKKRKRKKNK) the composition is skewed to basic residues. Ser-733, Ser-735, and Ser-753 each carry phosphoserine. Over residues 745–767 (AQDDSQRRSLPAEEGNSGKKDDG) the composition is skewed to basic and acidic residues. Positions 794–804 (ANTKHSSRSSH) are enriched in basic residues. The segment covering 832-849 (SEEEEEEEEEEEEEDEDS) has biased composition (acidic residues). The segment covering 856-871 (SRSRSGHRHSSHRSSR) has biased composition (basic residues). The span at 872-900 (RSYSSSSDASSDQSCYSRQHSYSDDSYSD) shows a compositional bias: low complexity. A phosphoserine mark is found at Ser-915 and Ser-918. The segment covering 923–932 (SKHRSKRHKY) has biased composition (basic residues). Residues Ser-985, Ser-1013, Ser-1018, Ser-1037, and Ser-1039 each carry the phosphoserine modification. Over residues 1017-1031 (ESPEERRSGRRDFIR) the composition is skewed to basic and acidic residues. A compositionally biased stretch (basic and acidic residues) spans 1050-1063 (GPGKKEDGRGDDSK). A Phosphoserine modification is found at Ser-1085. 3 stretches are compositionally biased toward basic and acidic residues: residues 1097–1112 (LLEK…KPNV), 1163–1185 (KKCE…EEGS), and 1211–1220 (EEPKSEEATA). A Glycyl lysine isopeptide (Lys-Gly) (interchain with G-Cter in SUMO2) cross-link involves residue Lys-1109. Ser-1179 carries the post-translational modification Phosphoserine.

This chain is G patch domain-containing protein 8 (Gpatch8), found in Mus musculus (Mouse).